The primary structure comprises 539 residues: Chaperonin GroEL (539 aa).

ATP contacts are provided by residues 29–32 (TLGP), 86–90 (DGTTT), Gly413, 476–478 (NAA), and Asp492.

The protein belongs to the chaperonin (HSP60) family. In terms of assembly, forms a cylinder of 14 subunits composed of two heptameric rings stacked back-to-back. Interacts with the co-chaperonin GroES.

It localises to the cytoplasm. The enzyme catalyses ATP + H2O + a folded polypeptide = ADP + phosphate + an unfolded polypeptide.. Together with its co-chaperonin GroES, plays an essential role in assisting protein folding. The GroEL-GroES system forms a nano-cage that allows encapsulation of the non-native substrate proteins and provides a physical environment optimized to promote and accelerate protein folding. The chain is Chaperonin GroEL from Streptococcus thermophilus (strain CNRZ 1066).